Here is a 454-residue protein sequence, read N- to C-terminus: MTNAPPATPKIGFVSLGCPKALVDSEQILTQLRAEGYDTAKSYDGADLVIVNTCGFIDAAVQESLDAIGEALHENGRVIVTGCLGAKKDANGDDIIQKVHPKVLAVTGPHALGEVMDAVHLHMPKPHAPFLDLLPPQGIKLTPKHFAYLKISEGCNHRCSFCIIPSMRGDLVSRPIADVMMEAENLFKAGVKELLVISQDTSAYGVDIKFRMGFWNGKPVKTHMTQLVEALGELAAPYGAWVRLHYVYPYPHVDAIIPMMAEGKILPYLDVPLQHAHPDVLKRMKRPASGEKNIERIQAWRAMCPDLTIRSTFIAGFPGETEAEFEYLLDFLKEAEIDRLGCFAYSPVEGATANDLPNAVPEEVREERRGRVMLLQEEISKKRLQAKVGKTMRVLIDEVNRTGAATARSGADAPEIDGVVYVKAPYEPHIKYKVGEFVDVKITGADAHDLWAEA.

Residues 9 to 124 (PKIGFVSLGC…VMDAVHLHMP (116 aa)) form the MTTase N-terminal domain. Residues Cys18, Cys54, Cys83, Cys155, Cys159, and Cys162 each contribute to the [4Fe-4S] cluster site. Positions 141-382 (LTPKHFAYLK…MLLQEEISKK (242 aa)) constitute a Radical SAM core domain. A TRAM domain is found at 385–454 (QAKVGKTMRV…ADAHDLWAEA (70 aa)).

It belongs to the methylthiotransferase family. RimO subfamily. [4Fe-4S] cluster serves as cofactor.

Its subcellular location is the cytoplasm. The enzyme catalyses L-aspartate(89)-[ribosomal protein uS12]-hydrogen + (sulfur carrier)-SH + AH2 + 2 S-adenosyl-L-methionine = 3-methylsulfanyl-L-aspartate(89)-[ribosomal protein uS12]-hydrogen + (sulfur carrier)-H + 5'-deoxyadenosine + L-methionine + A + S-adenosyl-L-homocysteine + 2 H(+). Functionally, catalyzes the methylthiolation of an aspartic acid residue of ribosomal protein uS12. The polypeptide is Ribosomal protein uS12 methylthiotransferase RimO (Herminiimonas arsenicoxydans).